The sequence spans 1306 residues: Angiotensin-converting enzyme (1306 aa).

Positions 1–28 (MGAASGRRSPPLLLPLLLLLLPPPPVIL) are cleaved as a signal peptide. Residues 29 to 1256 (ELDPALQPGN…GLNLEEQQAR (1228 aa)) are Extracellular-facing. Peptidase M2 domains follow at residues 40-624 (PADE…LGWP) and 643-1222 (VSDE…LGWP). Asparagine 54, asparagine 74, asparagine 111, asparagine 146, and asparagine 160 each carry an N-linked (GlcNAc...) asparagine glycan. A disulfide bond links cysteine 157 and cysteine 165. A chloride-binding site is contributed by tyrosine 231. Asparagine 318 carries N-linked (GlcNAc...) asparagine glycosylation. A disulfide bridge connects residues cysteine 359 and cysteine 377. Histidine 390 contacts Zn(2+). Residue glutamate 391 is the Proton acceptor 1 of the active site. Histidine 394 and glutamate 418 together coordinate Zn(2+). N-linked (GlcNAc...) asparagine glycosylation is found at asparagine 445 and asparagine 509. The Proton donor 1 role is filled by histidine 520. An N-linked (GlcNAc...) asparagine glycan is attached at asparagine 523. Arginine 529 lines the chloride pocket. An intrachain disulfide couples cysteine 545 to cysteine 557. 4 N-linked (GlcNAc...) asparagine glycosylation sites follow: asparagine 673, asparagine 695, asparagine 714, and asparagine 760. An intrachain disulfide couples cysteine 757 to cysteine 763. Positions 791 and 829 each coordinate chloride. N-linked (GlcNAc...) asparagine glycosylation occurs at asparagine 942. A disulfide bond links cysteine 957 and cysteine 975. Histidine 988 contributes to the Zn(2+) binding site. Glutamate 989 functions as the Proton acceptor 2 in the catalytic mechanism. Histidine 992 and glutamate 1016 together coordinate Zn(2+). Chloride contacts are provided by tryptophan 1090 and arginine 1094. Histidine 1118 acts as the Proton donor 2 in catalysis. Arginine 1127 is a binding site for chloride. Cysteine 1143 and cysteine 1155 are disulfide-bonded. 2 N-linked (GlcNAc...) asparagine glycosylation sites follow: asparagine 1191 and asparagine 1225. The interval 1215–1256 (HGEKLGWPQYNWTPNSARLEGPFVGSGRVNFLGLNLEEQQAR) is juxtamembrane stalk. A helical transmembrane segment spans residues 1257–1277 (VGQWVLLFLGVALLVATLGLT). The Cytoplasmic portion of the chain corresponds to 1278-1306 (QRLFSIRHHSLRRPHRGPQFGSEVELRHS). A Phosphoserine modification is found at serine 1299.

The protein belongs to the peptidase M2 family. In terms of assembly, monomer and homodimer; homodimerizes following binding to an inhibitor. Interacts with calmodulin (CALM1, CALM2 or CALM3); interaction takes place in the cytoplasmic region and regulates phosphorylation and proteolytic cleavage. Zn(2+) serves as cofactor. It depends on chloride as a cofactor. Post-translationally, produced following proteolytic cleavage by secretase enzymes that cleave the transmembrane form in the juxtamembrane stalk region upstream of the transmembrane region. Cleavage can take place at different sites of the juxtamembrane stalk region. Phosphorylated by CK2 on Ser-1299; which allows membrane retention. Phosphorylated on tyrosine residues on its extracellular part, promoting cleavage by secretase enzymes and formation of the soluble form (Angiotensin-converting enzyme, soluble form).

It localises to the cell membrane. Its subcellular location is the cytoplasm. The protein resides in the secreted. The enzyme catalyses Release of a C-terminal dipeptide, oligopeptide-|-Xaa-Yaa, when Xaa is not Pro, and Yaa is neither Asp nor Glu. Thus, conversion of angiotensin I to angiotensin II, with increase in vasoconstrictor activity, but no action on angiotensin II.. The catalysed reaction is angiotensin I + H2O = L-histidyl-L-leucine + angiotensin II. It catalyses the reaction bradykinin + H2O = L-Phe-L-Arg + bradykinin(1-7). It carries out the reaction substance P + H2O = substance P(1-9) + L-Leu-L-Met-NH2. The enzyme catalyses substance P + H2O = substance P(1-8) + Gly-L-Leu-L-Met-NH2. The catalysed reaction is substance P + H2O = L-Phe-L-Phe-Gly-L-Leu-L-Met-NH2 + substance P(1-6). It catalyses the reaction neurotensin + H2O = neurotensin(1-11) + L-isoleucyl-L-leucine. It carries out the reaction goralatide + H2O = N-acetyl-L-seryl-L-aspartate + L-lysyl-L-proline. The enzyme catalyses Met-enkephalin + H2O = L-phenylalanyl-L-methionine + L-tyrosylglycylglycine. The catalysed reaction is Leu-enkephalin + H2O = L-tyrosylglycylglycine + L-phenylalanyl-L-leucine. It catalyses the reaction Met-enkephalin-Arg-Phe + H2O = L-arginyl-L-phenylalanine + Met-enkephalin. With respect to regulation, the dipeptidyl carboxypeptidase activity is strongly activated by chloride. The dipeptidyl carboxypeptidase activity is specifically inhibited by lisinopril, captopril and enalaprilat. Functionally, dipeptidyl carboxypeptidase that removes dipeptides from the C-terminus of a variety of circulating hormones, such as angiotensin I, bradykinin or enkephalins, thereby playing a key role in the regulation of blood pressure, electrolyte homeostasis or synaptic plasticity. Composed of two similar catalytic domains, each possessing a functional active site, with different selectivity for substrates. Plays a major role in the angiotensin-renin system that regulates blood pressure and sodium retention by the kidney by converting angiotensin I to angiotensin II, resulting in an increase of the vasoconstrictor activity of angiotensin. Also able to inactivate bradykinin, a potent vasodilator, and therefore enhance the blood pressure response. Acts as a regulator of synaptic transmission by mediating cleavage of neuropeptide hormones, such as substance P, neurotensin or enkephalins. Catalyzes degradation of different enkephalin neuropeptides (Met-enkephalin, Leu-enkephalin, Met-enkephalin-Arg-Phe and possibly Met-enkephalin-Arg-Gly-Leu). Acts as a regulator of synaptic plasticity in the nucleus accumbens of the brain by mediating cleavage of Met-enkephalin-Arg-Phe, a strong ligand of Mu-type opioid receptor OPRM1, into Met-enkephalin. Met-enkephalin-Arg-Phe cleavage by ACE decreases activation of OPRM1, leading to long-term synaptic potentiation of glutamate release. Also acts as a regulator of hematopoietic stem cell differentiation by mediating degradation of hemoregulatory peptide N-acetyl-SDKP (AcSDKP). Acts as a regulator of cannabinoid signaling pathway by mediating degradation of hemopressin, an antagonist peptide of the cannabinoid receptor CNR1. Involved in amyloid-beta metabolism by catalyzing degradation of Amyloid-beta protein 40 and Amyloid-beta protein 42 peptides, thereby preventing plaque formation. Catalyzes cleavage of cholecystokinin (maturation of Cholecystokinin-8 and Cholecystokinin-5) and Gonadoliberin-1 (both maturation and degradation) hormones. Degradation of hemoregulatory peptide N-acetyl-SDKP (AcSDKP) and amyloid-beta proteins is mediated by the N-terminal catalytic domain, while angiotensin I and cholecystokinin cleavage is mediated by the C-terminal catalytic region. In terms of biological role, soluble form that is released in blood plasma and other body fluids following proteolytic cleavage in the juxtamembrane stalk region. This chain is Angiotensin-converting enzyme, found in Bos taurus (Bovine).